Consider the following 140-residue polypeptide: Myelodysplastic syndrome 2 translocation-associated protein (140 aa).

In terms of tissue distribution, highly expressed in peripheral blood leukocytes, spleen, thymus, kidney, pancreas and lung.

This is Myelodysplastic syndrome 2 translocation-associated protein (MDS2) from Homo sapiens (Human).